The sequence spans 396 residues: Elongation factor Tu (396 aa).

In terms of domain architecture, tr-type G spans 10–206 (KPHVNVGTIG…ALDTYIPTPE (197 aa)). Residues 19-26 (GHVDHGKT) form a G1 region. Residue 19–26 (GHVDHGKT) participates in GTP binding. Mg(2+) is bound at residue threonine 26. The G2 stretch occupies residues 60–64 (GITIN). Positions 81–84 (DCPG) are G3. Residues 81-85 (DCPGH) and 136-139 (NKAD) contribute to the GTP site. The tract at residues 136–139 (NKAD) is G4. Positions 174–176 (SAK) are G5.

The protein belongs to the TRAFAC class translation factor GTPase superfamily. Classic translation factor GTPase family. EF-Tu/EF-1A subfamily. As to quaternary structure, monomer.

It is found in the cytoplasm. It catalyses the reaction GTP + H2O = GDP + phosphate + H(+). In terms of biological role, GTP hydrolase that promotes the GTP-dependent binding of aminoacyl-tRNA to the A-site of ribosomes during protein biosynthesis. This Bordetella avium (strain 197N) protein is Elongation factor Tu.